The following is a 369-amino-acid chain: Glutamate 5-kinase (369 aa).

Position 9 (Lys9) interacts with ATP. Ser49, Asp136, and Asn148 together coordinate substrate. ATP-binding positions include 168–169 (TD) and 210–216 (TGGMLTK). The PUA domain occupies 275-355 (QGEIYVDQGA…KGVVIHRDDW (81 aa)).

This sequence belongs to the glutamate 5-kinase family.

The protein resides in the cytoplasm. It carries out the reaction L-glutamate + ATP = L-glutamyl 5-phosphate + ADP. Its pathway is amino-acid biosynthesis; L-proline biosynthesis; L-glutamate 5-semialdehyde from L-glutamate: step 1/2. Its function is as follows. Catalyzes the transfer of a phosphate group to glutamate to form L-glutamate 5-phosphate. The chain is Glutamate 5-kinase from Streptococcus sanguinis (strain SK36).